A 225-amino-acid chain; its full sequence is UPF0758 protein XC_3944 (225 aa).

Positions 102–224 constitute an MPN domain; that stretch reads ALSDPSSVGR…PVSLAERGWV (123 aa). Residues His173, His175, and Asp186 each coordinate Zn(2+). Residues 173 to 186 carry the JAMM motif motif; that stretch reads HNHPSGNPEPSEAD.

This sequence belongs to the UPF0758 family.

This Xanthomonas campestris pv. campestris (strain 8004) protein is UPF0758 protein XC_3944.